The chain runs to 483 residues: V-type proton ATPase subunit H (483 aa).

The residue at position 483 (Ser-483) is a Phosphoserine.

It belongs to the V-ATPase H subunit family. As to quaternary structure, V-ATPase is a heteromultimeric enzyme made up of two complexes: the ATP-hydrolytic V1 complex and the proton translocation V0 complex. The V1 complex consists of three catalytic AB heterodimers that form a heterohexamer, three peripheral stalks each consisting of EG heterodimers, one central rotor including subunits D and F, and the regulatory subunits C and H. The proton translocation complex V0 consists of the proton transport subunit a, a ring of proteolipid subunits c9c'', rotary subunit d, subunits e and f, and the accessory subunits ATP6AP1/Ac45 and ATP6AP2/PRR. Interacts with AP2M1.

It localises to the cytoplasmic vesicle. It is found in the clathrin-coated vesicle membrane. In terms of biological role, subunit of the V1 complex of vacuolar(H+)-ATPase (V-ATPase), a multisubunit enzyme composed of a peripheral complex (V1) that hydrolyzes ATP and a membrane integral complex (V0) that translocates protons. V-ATPase is responsible for acidifying and maintaining the pH of intracellular compartments and in some cell types, is targeted to the plasma membrane, where it is responsible for acidifying the extracellular environment. Subunit H is essential for V-ATPase activity, but not for the assembly of the complex. Involved in the endocytosis mediated by clathrin-coated pits, required for the formation of endosomes. The protein is V-type proton ATPase subunit H (ATP6V1H) of Sus scrofa (Pig).